We begin with the raw amino-acid sequence, 173 residues long: Ribosome maturation factor RimM (173 aa).

The PRC barrel domain maps to 92-165 (EGEFYHADLI…RVVIEAPAEI (74 aa)).

Belongs to the RimM family. In terms of assembly, binds ribosomal protein uS19.

It localises to the cytoplasm. Its function is as follows. An accessory protein needed during the final step in the assembly of 30S ribosomal subunit, possibly for assembly of the head region. Essential for efficient processing of 16S rRNA. May be needed both before and after RbfA during the maturation of 16S rRNA. It has affinity for free ribosomal 30S subunits but not for 70S ribosomes. The polypeptide is Ribosome maturation factor RimM (Nitrobacter winogradskyi (strain ATCC 25391 / DSM 10237 / CIP 104748 / NCIMB 11846 / Nb-255)).